Here is a 206-residue protein sequence, read N- to C-terminus: FMN-dependent NADH:quinone oxidoreductase (206 aa).

FMN contacts are provided by residues Ser9, 15-17 (SVS), 95-98 (MYNF), and 139-142 (SRGG).

Belongs to the azoreductase type 1 family. As to quaternary structure, homodimer. The cofactor is FMN.

The enzyme catalyses 2 a quinone + NADH + H(+) = 2 a 1,4-benzosemiquinone + NAD(+). It catalyses the reaction N,N-dimethyl-1,4-phenylenediamine + anthranilate + 2 NAD(+) = 2-(4-dimethylaminophenyl)diazenylbenzoate + 2 NADH + 2 H(+). Quinone reductase that provides resistance to thiol-specific stress caused by electrophilic quinones. In terms of biological role, also exhibits azoreductase activity. Catalyzes the reductive cleavage of the azo bond in aromatic azo compounds to the corresponding amines. The polypeptide is FMN-dependent NADH:quinone oxidoreductase (Legionella pneumophila subsp. pneumophila (strain Philadelphia 1 / ATCC 33152 / DSM 7513)).